We begin with the raw amino-acid sequence, 189 residues long: Anthranilate synthase component 2 (189 aa).

The 189-residue stretch at methionine 1 to serine 189 folds into the Glutamine amidotransferase type-1 domain. Residue glycine 52–glycine 54 coordinates L-glutamine. Cysteine 79 functions as the Nucleophile; for GATase activity in the catalytic mechanism. Residues glutamine 83 and serine 129–leucine 130 each bind L-glutamine. Active-site residues include histidine 169 and glutamate 171.

Tetramer of two components I and two components II.

Its subcellular location is the plastid. It localises to the chloroplast. It carries out the reaction chorismate + L-glutamine = anthranilate + pyruvate + L-glutamate + H(+). It participates in amino-acid biosynthesis; L-tryptophan biosynthesis; L-tryptophan from chorismate: step 1/5. The sequence is that of Anthranilate synthase component 2 (trpG) from Pyropia yezoensis (Susabi-nori).